A 389-amino-acid polypeptide reads, in one-letter code: Protein OSCP1 (389 aa).

In terms of tissue distribution, expressed predominantly in testis, also found in placenta and to a lesser extent in thymus and small intestine; abundantly expressed in tumor-derived cell lines. Ubiquitously expressed.

The protein resides in the basal cell membrane. In terms of biological role, may be involved in drug clearance in the placenta. In Homo sapiens (Human), this protein is Protein OSCP1 (OSCP1).